The sequence spans 353 residues: Ferrochelatase (353 aa).

His-223 and Glu-304 together coordinate Fe cation.

Belongs to the ferrochelatase family.

Its subcellular location is the cytoplasm. The catalysed reaction is heme b + 2 H(+) = protoporphyrin IX + Fe(2+). The protein operates within porphyrin-containing compound metabolism; protoheme biosynthesis; protoheme from protoporphyrin-IX: step 1/1. Its function is as follows. Catalyzes the ferrous insertion into protoporphyrin IX. This is Ferrochelatase from Mesorhizobium japonicum (strain LMG 29417 / CECT 9101 / MAFF 303099) (Mesorhizobium loti (strain MAFF 303099)).